The sequence spans 100 residues: Urease subunit gamma (100 aa).

It belongs to the urease gamma subunit family. In terms of assembly, heterotrimer of UreA (gamma), UreB (beta) and UreC (alpha) subunits. Three heterotrimers associate to form the active enzyme.

The protein resides in the cytoplasm. The enzyme catalyses urea + 2 H2O + H(+) = hydrogencarbonate + 2 NH4(+). It participates in nitrogen metabolism; urea degradation; CO(2) and NH(3) from urea (urease route): step 1/1. The sequence is that of Urease subunit gamma from Roseobacter denitrificans (strain ATCC 33942 / OCh 114) (Erythrobacter sp. (strain OCh 114)).